The primary structure comprises 194 residues: Protein GrpE (194 aa).

The tract at residues 1-40 is disordered; the sequence is MSRKHHKEQEEIQEQETISAGAAETPAEETAAIPAATEAD. The segment covering 20–38 has biased composition (low complexity); the sequence is AGAAETPAEETAAIPAATE.

The protein belongs to the GrpE family. In terms of assembly, homodimer.

It is found in the cytoplasm. Participates actively in the response to hyperosmotic and heat shock by preventing the aggregation of stress-denatured proteins, in association with DnaK and GrpE. It is the nucleotide exchange factor for DnaK and may function as a thermosensor. Unfolded proteins bind initially to DnaJ; upon interaction with the DnaJ-bound protein, DnaK hydrolyzes its bound ATP, resulting in the formation of a stable complex. GrpE releases ADP from DnaK; ATP binding to DnaK triggers the release of the substrate protein, thus completing the reaction cycle. Several rounds of ATP-dependent interactions between DnaJ, DnaK and GrpE are required for fully efficient folding. The protein is Protein GrpE of Chlorobaculum tepidum (strain ATCC 49652 / DSM 12025 / NBRC 103806 / TLS) (Chlorobium tepidum).